We begin with the raw amino-acid sequence, 444 residues long: Sprouty-related, EVH1 domain-containing protein 1 (444 aa).

An N-acetylserine modification is found at Ser-2. The 118-residue stretch at 6–123 (ATSDNDNSYA…RGIRRAIEDI (118 aa)) folds into the WH1 domain. The segment at 123-151 (ISQGCPESKNEAEGADDLQANEEDSSSSL) is disordered. Residues 135–147 (EGADDLQANEEDS) are compositionally biased toward acidic residues. Residue Lys-224 is modified to N6-methyllysine. Residues 233–285 (SIRHVSFQDEDEIVRINPRDILIRRYADYRHPDMWKNDLERDDADSSIQFSKP) form the KBD domain. Phosphoserine occurs at positions 238 and 308. The required for interaction with TESK1 stretch occupies residues 333-444 (SRCVYCQERF…CCGGKHKAAG (112 aa)). Residues 334 to 442 (RCVYCQERFN…CGCCGGKHKA (109 aa)) enclose the SPR domain.

As to quaternary structure, homodimer and heterodimer. Able to interact with SPRED2 to form heterodimers. Interacts (via C-terminus) with TAOK1/MARKK (via C-terminus); the interaction does not affect TAOK1 kinase activity. Interacts (via C-terminus) with TESK1 (via C-terminus); the interaction inhibits TESK1 kinase activity. Interacts with CAV1. Interacts with RAS. Interacts with palmitoyltransferase ZDHHC17/HIP14; the interaction leads to palmitoylation of SPRED1. Palmitoylated by ZDHHC17/HIP14. In terms of processing, phosphorylated on tyrosine. Post-translationally, ubiquitinated. Weakly expressed in embryonic cell line HEK293.

It is found in the cell membrane. Its subcellular location is the membrane. The protein resides in the caveola. The protein localises to the nucleus. In terms of biological role, tyrosine kinase substrate that inhibits growth-factor-mediated activation of MAP kinase. Negatively regulates hematopoiesis of bone marrow. Inhibits fibroblast growth factor (FGF)-induced retinal lens fiber differentiation, probably by inhibiting FGF-mediated phosphorylation of ERK1/2. Attenuates actin stress fiber formation via inhibition of TESK1-mediated phosphorylation of cofilin. Inhibits TGFB-induced epithelial-to-mesenchymal transition in lens epithelial cells. The polypeptide is Sprouty-related, EVH1 domain-containing protein 1 (SPRED1) (Homo sapiens (Human)).